Consider the following 385-residue polypeptide: O-phospho-L-seryl-tRNA:Cys-tRNA synthase (385 aa).

Pyridoxal 5'-phosphate is bound by residues Ala-89–Arg-90, Asn-195, and Ser-218–His-220. Lys-221 is subject to N6-(pyridoxal phosphate)lysine.

Belongs to the SepCysS family. Homodimer. Interacts with SepRS. Pyridoxal 5'-phosphate serves as cofactor.

The catalysed reaction is O-phospho-L-seryl-tRNA(Cys) + hydrogen sulfide + H(+) = L-cysteinyl-tRNA(Cys) + phosphate. Its function is as follows. Converts O-phospho-L-seryl-tRNA(Cys) (Sep-tRNA(Cys)) to L-cysteinyl-tRNA(Cys) (Cys-tRNA(Cys)). In Methanococcus aeolicus (strain ATCC BAA-1280 / DSM 17508 / OCM 812 / Nankai-3), this protein is O-phospho-L-seryl-tRNA:Cys-tRNA synthase.